Here is a 208-residue protein sequence, read N- to C-terminus: Small ribosomal subunit protein uS4 (208 aa).

The region spanning 98 to 178 (SRLDNVVYRM…RPKWLEYDAE (81 aa)) is the S4 RNA-binding domain.

It belongs to the universal ribosomal protein uS4 family. In terms of assembly, part of the 30S ribosomal subunit. Contacts protein S5. The interaction surface between S4 and S5 is involved in control of translational fidelity.

Functionally, one of the primary rRNA binding proteins, it binds directly to 16S rRNA where it nucleates assembly of the body of the 30S subunit. With S5 and S12 plays an important role in translational accuracy. The sequence is that of Small ribosomal subunit protein uS4 from Acetivibrio thermocellus (strain ATCC 27405 / DSM 1237 / JCM 9322 / NBRC 103400 / NCIMB 10682 / NRRL B-4536 / VPI 7372) (Clostridium thermocellum).